Here is a 288-residue protein sequence, read N- to C-terminus: Diaminopimelate epimerase (288 aa).

3 residues coordinate substrate: Asn13, Gln46, and Asn66. Residue Cys75 is the Proton donor of the active site. Substrate contacts are provided by residues 76–77, Asn166, Asn199, and 217–218; these read GN and ER. Cys226 functions as the Proton acceptor in the catalytic mechanism. 227–228 is a substrate binding site; it reads GT.

It belongs to the diaminopimelate epimerase family. Homodimer.

The protein resides in the cytoplasm. The catalysed reaction is (2S,6S)-2,6-diaminopimelate = meso-2,6-diaminopimelate. It functions in the pathway amino-acid biosynthesis; L-lysine biosynthesis via DAP pathway; DL-2,6-diaminopimelate from LL-2,6-diaminopimelate: step 1/1. Catalyzes the stereoinversion of LL-2,6-diaminopimelate (L,L-DAP) to meso-diaminopimelate (meso-DAP), a precursor of L-lysine and an essential component of the bacterial peptidoglycan. The chain is Diaminopimelate epimerase from Cupriavidus necator (strain ATCC 17699 / DSM 428 / KCTC 22496 / NCIMB 10442 / H16 / Stanier 337) (Ralstonia eutropha).